The following is a 216-amino-acid chain: Ras-related protein Rab-5C (216 aa).

The GTP site is built by S30, A31, G33, K34, S35, S36, H47, E48, T53, G79, N134, K135, D137, A165, and K166. S35 lines the Mg(2+) pocket. 2 short sequence motifs (switch) span residues 45-57 (QFHEYQESTIGAA) and 78-94 (AGQERYHSLAPMYYRGA). T53 lines the Mg(2+) pocket. Residues 184–216 (KNEPQNAPGGPGRNRVVDLQESSQPSRSQCCSN) form a disordered region. Positions 203–216 (QESSQPSRSQCCSN) are enriched in polar residues. Residues C213 and C214 are each lipidated (S-geranylgeranyl cysteine).

Belongs to the small GTPase superfamily. Rab family. Mg(2+) serves as cofactor. In terms of tissue distribution, detected in brain, ovary, rectum, small intestine, large intestine, liver, spleen, follicle and kidney (at protein level).

Its subcellular location is the cell membrane. The protein resides in the early endosome membrane. The enzyme catalyses GTP + H2O = GDP + phosphate + H(+). Its activity is regulated as follows. Regulated by guanine nucleotide exchange factors (GEFs) which promote the exchange of bound GDP for free GTP. Regulated by GTPase activating proteins (GAPs) which increase the GTP hydrolysis activity. Inhibited by GDP dissociation inhibitors (GDIs). Functionally, the small GTPases Rab are key regulators of intracellular membrane trafficking, from the formation of transport vesicles to their fusion with membranes. Rabs cycle between an inactive GDP-bound form and an active GTP-bound form that is able to recruit to membranes different sets of downstream effectors directly responsible for vesicle formation, movement, tethering and fusion. In Gallus gallus (Chicken), this protein is Ras-related protein Rab-5C (RAB5C).